The primary structure comprises 216 residues: Protein-L-isoaspartate O-methyltransferase (216 aa).

Residue S64 is part of the active site.

Belongs to the methyltransferase superfamily. L-isoaspartyl/D-aspartyl protein methyltransferase family.

The protein localises to the cytoplasm. The enzyme catalyses [protein]-L-isoaspartate + S-adenosyl-L-methionine = [protein]-L-isoaspartate alpha-methyl ester + S-adenosyl-L-homocysteine. Its function is as follows. Catalyzes the methyl esterification of L-isoaspartyl residues in peptides and proteins that result from spontaneous decomposition of normal L-aspartyl and L-asparaginyl residues. It plays a role in the repair and/or degradation of damaged proteins. The sequence is that of Protein-L-isoaspartate O-methyltransferase from Paracoccus denitrificans (strain Pd 1222).